Consider the following 478-residue polypeptide: Cysteine--tRNA ligase (478 aa).

Cys37 serves as a coordination point for Zn(2+). The 'HIGH' region signature appears at 39–49; sequence PTVYHYAHIGN. Zn(2+) contacts are provided by Cys224, His249, and Glu253. The short motif at 281 to 285 is the 'KMSKS' region element; the sequence is KMSKS. Lys284 provides a ligand contact to ATP.

Belongs to the class-I aminoacyl-tRNA synthetase family. As to quaternary structure, monomer. Zn(2+) serves as cofactor.

Its subcellular location is the cytoplasm. It carries out the reaction tRNA(Cys) + L-cysteine + ATP = L-cysteinyl-tRNA(Cys) + AMP + diphosphate. This Protochlamydia amoebophila (strain UWE25) protein is Cysteine--tRNA ligase.